The following is a 682-amino-acid chain: MSRKQLALFEPTLVVQALKEAVKKLNPQAQWRNPVMFIVWIGSLLTTCISIAMASGAMPGNALFSAAISGWLWITVLFANFAEALAEGRSKAQANSLKGVKKTAFARKLREPKYGAVADKVPADQLRKGDIVLVEAGDIIPCDGEVIEGGASVDESAITGESAPVIRESGGDFASVTGGTRILSDWLVIECSVNPGETFLDRMIAMVEGAQRRKTPNEIALTILLIALTIVFLLATATLWPFSAWGGNAVSVTVLVALLVCLIPTTIGGLLSAIGVAGMSRMLGANVIATSGRAVEAAGDVDVLLLDKTGTITLGNRQASEFIPAQGVDEKTLADAAQLASLADETPEGRSIVILAKQRFNLRERDVQSLHATFVPFTAQSRMSGINIDNRMIRKGSVDAIRRHVEANGGHFPTDVDQKVDQVARQGATPLVVVEGSRVLGVIALKDIVKGGIKERFAQLRKMGIKTVMITGDNRLTAAAIAAEAGVDDFLAEATPEAKLALIRQYQAEGRLVAMTGDGTNDAPALAQADVAVAMNSGTQAAKEAGNMVDLDSNPTKLIEVVHIGKQMLMTRGSLTTFSIANDVAKYFAIIPAAFAATYPQLNALNIMCLHSPDSAILSAVIFNALIIVFLIPLALKGVSYKPLTASAMLRRNLWIYGLGGLLVPFIGIKVIDLLLTVCSLV.

4 consecutive transmembrane segments (helical) span residues 34–54, 62–82, 219–239, and 254–274; these read PVMF…IAMA, ALFS…ANFA, IALT…TATL, and VLVA…LSAI. Aspartate 307 functions as the 4-aspartylphosphate intermediate in the catalytic mechanism. ATP contacts are provided by residues aspartate 344, glutamate 348, 377–384, and lysine 395; that span reads FTAQSRMS. Mg(2+) contacts are provided by aspartate 518 and aspartate 522. The next 3 membrane-spanning stretches (helical) occupy residues 588–608, 616–636, and 656–676; these read FAII…LNIM, AILS…PLAL, and IYGL…DLLL.

The protein belongs to the cation transport ATPase (P-type) (TC 3.A.3) family. Type IA subfamily. The system is composed of three essential subunits: KdpA, KdpB and KdpC.

Its subcellular location is the cell inner membrane. The catalysed reaction is K(+)(out) + ATP + H2O = K(+)(in) + ADP + phosphate + H(+). Part of the high-affinity ATP-driven potassium transport (or Kdp) system, which catalyzes the hydrolysis of ATP coupled with the electrogenic transport of potassium into the cytoplasm. This subunit is responsible for energy coupling to the transport system and for the release of the potassium ions to the cytoplasm. The sequence is that of Potassium-transporting ATPase ATP-binding subunit from Escherichia coli (strain ATCC 8739 / DSM 1576 / NBRC 3972 / NCIMB 8545 / WDCM 00012 / Crooks).